A 69-amino-acid polypeptide reads, in one-letter code: Small integral membrane protein 20 (69 aa).

Residues Met1 to Arg8 lie on the Mitochondrial matrix side of the membrane. A helical membrane pass occupies residues Thr9 to Phe29. The Mitochondrial intermembrane segment spans residues Arg30 to Lys69. A Phenylalanine amide modification is found at Phe66.

Component of the MITRAC (mitochondrial translation regulation assembly intermediate of cytochrome c oxidase complex) complex, the core components of this complex being COA3/MITRAC12 and COX14. Interacts with COA3/MITRAC12 and COX4I1. Directly interacts with newly synthesized MT-CO1/COX1. As to expression, highly expressed in the hypothalamus, the spinal cord, and sensory ganglia (at protein level). Also expressed on in the epidermis and dermis layers of the skin (at protein level). Expressed in preadipocytes and adipocytes (at protein level). Expressed in the ovary, specifically in granulosa cells of follicles that have passed the primary stage and in oocytes (at protein level).

The protein localises to the mitochondrion inner membrane. The protein resides in the secreted. In terms of biological role, component of the MITRAC (mitochondrial translation regulation assembly intermediate of cytochrome c oxidase complex) complex, that regulates cytochrome c oxidase assembly. Promotes the progression of complex assembly after the association of MT-CO1/COX1 with COX4I1 and COX6C. Chaperone-like assembly factor required to stabilize newly synthesized MT-CO1/COX1 and to prevent its premature turnover. Peptide involved in a broad spectrum of regulatory functions. Is a ligand for GPR173. As part of the reproductive cycle, it regulates gonadotropin-releasing hormone (GnRH) signaling in the hypothalamus and pituitary gland which augments the release of luteinizing hormone. More specifically, it regulates the expression of transcription factors CEBPB and POU2F1/OCT1 through the cAMP-PKA signaling pathway, which subsequently regulate the expression of GNRHR and KISS1. Plays a protective role in memory retention through activation of GNRHR. Regulates the secretion of AVP by hypothalamic neurons. Plays a role in the transduction of the itch sensation. Induces anxiolytic effects, reducing behavior associated with anxiety. Regulates food intake as well as satiation and satiety by increasing Nucb2 expression in neurons. In the ovary, it regulates follicular growth by stimulating granulosa cell proliferation by increasing the expression of GPR173, CREB1, CYP19A1, KITLG, FSHR, and LHCGR. It also increases the production of estradiol (E2). In the heart, it regulates contractility and relaxation by activating the AKT1-NOS3 and MAPK1-MAPK3 signaling pathways. It also plays a cardioprotective role during ischemia, where it activates the SAFE and RISK pathways. Stimulates the proliferation and differentiation of preadipocytes. In pancreatic islet cells, it induces proliferation of islet cells as well as the production of INS through activation of the MAPK1-MAPK3 signaling pathways. This is Small integral membrane protein 20 from Mus musculus (Mouse).